The chain runs to 427 residues: 11-beta-hydroxysteroid dehydrogenase type 2 (427 aa).

82–111 (TRAVLITGCDSGFGNATAKKLDAMGFTVLA) provides a ligand contact to NAD(+). Ser219 contacts substrate. Catalysis depends on Tyr232, which acts as the Proton acceptor.

This sequence belongs to the short-chain dehydrogenases/reductases (SDR) family. Interacts with ligand-free cytoplasmic NR3C2. As to expression, highly expressed in the kidney and adrenal and at lower levels in the colon.

It is found in the microsome. The protein resides in the endoplasmic reticulum. It catalyses the reaction an 11beta-hydroxysteroid + NAD(+) = an 11-oxosteroid + NADH + H(+). The catalysed reaction is corticosterone + NAD(+) = 11-dehydrocorticosterone + NADH + H(+). The enzyme catalyses cortisol + NAD(+) = cortisone + NADH + H(+). It carries out the reaction 11beta,17beta-dihydroxyandrost-4-ene-3-one + NAD(+) = 17beta-hydroxyandrost-4-ene-3,11-dione + NADH + H(+). It catalyses the reaction 11beta-hydroxyandrost-4-ene-3,17-dione + NAD(+) = androst-4-ene-3,11,17-trione + NADH + H(+). It functions in the pathway steroid metabolism. With respect to regulation, inhibited by glycyrrhetinic acid, carbenoloxone, 11-alpha-OH-progesterone and 11-beta-OH-progesterone. Functionally, catalyzes the conversion of biologically active 11beta-hydroxyglucocorticoids (11beta-hydroxysteroid) such as cortisol, to inactive 11-ketoglucocorticoids (11-oxosteroid) such as cortisone, in the presence of NAD(+). Functions as a dehydrogenase (oxidase), thereby decreasing the concentration of active glucocorticoids, thus protecting the nonselective mineralocorticoid receptor from occupation by glucocorticoids. Plays an important role in maintaining glucocorticoids balance during preimplantation and protects the fetus from excessive maternal corticosterone exposure. Catalyzes the oxidation of 11beta-hydroxytestosterone (11beta,17beta-dihydroxyandrost-4-ene-3-one) to 11-ketotestosterone (17beta-hydroxyandrost-4-ene-3,11-dione), a major bioactive androgen. Catalyzes the conversion of 11beta-hydroxyandrostenedione (11beta-hydroxyandrost-4-ene-3,17-dione) to 11-ketoandrostenedione (androst-4-ene-3,11,17-trione), which can be further metabolized to 11-ketotestosterone. Converts 7-beta-25-dihydroxycholesterol to 7-oxo-25-hydroxycholesterol in vitro. 7-beta-25-dihydroxycholesterol (not 7-oxo-25-hydroxycholesterol) acts as a ligand for the G-protein-coupled receptor (GPCR) Epstein-Barr virus-induced gene 2 (EBI2) and may thereby regulate immune cell migration. May protect ovulating oocytes and fertilizing spermatozoa from the adverse effects of cortisol. The protein is 11-beta-hydroxysteroid dehydrogenase type 2 (HSD11B2) of Ovis aries (Sheep).